Consider the following 147-residue polypeptide: Protein archease (147 aa).

Ca(2+) contacts are provided by Asp17, Asp146, and Ile147.

It belongs to the archease family.

Functionally, activates the tRNA-splicing ligase complex by facilitating the enzymatic turnover of catalytic subunit RtcB. Acts by promoting the guanylylation of RtcB, a key intermediate step in tRNA ligation. Can also alter the NTP specificity of RtcB such that ATP, dGTP or ITP is used efficiently. The chain is Protein archease from Pyrobaculum neutrophilum (strain DSM 2338 / JCM 9278 / NBRC 100436 / V24Sta) (Thermoproteus neutrophilus).